The sequence spans 83 residues: MSSGGLLLLLGLLTLWEVLTPVSSKDRPNFCKLPAETGRCNAKIPRFYYNPRQHQCIEFLYGGCGGNANNFKTIKECESTCAA.

A signal peptide spans 1 to 24 (MSSGGLLLLLGLLTLWEVLTPVSS). The BPTI/Kunitz inhibitor domain maps to 31 to 81 (CKLPAETGRCNAKIPRFYYNPRQHQCIEFLYGGCGGNANNFKTIKECESTC). 3 disulfides stabilise this stretch: Cys31–Cys81, Cys40–Cys64, and Cys56–Cys77.

It belongs to the venom Kunitz-type family. In terms of tissue distribution, expressed by the venom gland.

The protein localises to the secreted. Serine protease inhibitor. Does not inhibit plasmin, and does not reduce blood loss in the mouse tail vein blood loss model. This chain is Kunitz-type serine protease inhibitor textilinin-3, found in Pseudonaja textilis textilis (Eastern brown snake).